Consider the following 299-residue polypeptide: UBX domain-containing protein 1 (299 aa).

3 disordered regions span residues 39–61, 127–176, and 191–218; these read AGVP…SGAP, KAKL…NEDE, and EARK…APPK. Over residues 46–61 the composition is skewed to low complexity; it reads DAPAQAAPGAADSGAP. Residues 111 to 179 are a coiled coil; that stretch reads AKVLEIREKI…REKNEDEIAR (69 aa). Residues 128-176 are compositionally biased toward basic and acidic residues; sequence AKLEAEENREKEKKRREDGKAMISHKEAARDREIREAAQDRRREKNEDE. Positions 201 to 213 are enriched in low complexity; that stretch reads PVPEAKPAPSAAP. The 78-residue stretch at 218-295 folds into the UBX domain; sequence KDYSTTTLQF…NLVPSANVIL (78 aa).

In terms of assembly, interacts with cdc-48.1 (via N-terminus) and cdc-48.2 (via N-terminus) in vitro; the interaction with cdc-48.1 is not detected in vivo. In terms of tissue distribution, expressed in the germline (at protein level). Expressed in spermatocytes but not in mature sperm (at protein level). Ubiquitously expressed. Predominantly expressed in the spermatheca.

It is found in the cytoplasm. The protein localises to the perinuclear region. Ubiquitin-binding protein which acts as an adapter for ATPase cdc-48.1 and/or cdc-48.2, conferring substrate specificity. Together with ubxn-2 and ubxn-3, plays a role in hermaphrodite spermatogenesis probably by promoting the degradation of sex determination terminal factor tra-1. The polypeptide is UBX domain-containing protein 1 (Caenorhabditis elegans).